Here is a 248-residue protein sequence, read N- to C-terminus: Pyridoxine 5'-phosphate synthase (248 aa).

Asn11 serves as a coordination point for 3-amino-2-oxopropyl phosphate. Residue 13 to 14 (DH) coordinates 1-deoxy-D-xylulose 5-phosphate. Arg22 provides a ligand contact to 3-amino-2-oxopropyl phosphate. His47 acts as the Proton acceptor in catalysis. 1-deoxy-D-xylulose 5-phosphate contacts are provided by Arg49 and His54. Catalysis depends on Glu74, which acts as the Proton acceptor. Thr104 is a binding site for 1-deoxy-D-xylulose 5-phosphate. His198 acts as the Proton donor in catalysis. 3-amino-2-oxopropyl phosphate is bound by residues Gly199 and 220 to 221 (GH).

This sequence belongs to the PNP synthase family. As to quaternary structure, homooctamer; tetramer of dimers.

The protein resides in the cytoplasm. It carries out the reaction 3-amino-2-oxopropyl phosphate + 1-deoxy-D-xylulose 5-phosphate = pyridoxine 5'-phosphate + phosphate + 2 H2O + H(+). Its pathway is cofactor biosynthesis; pyridoxine 5'-phosphate biosynthesis; pyridoxine 5'-phosphate from D-erythrose 4-phosphate: step 5/5. Catalyzes the complicated ring closure reaction between the two acyclic compounds 1-deoxy-D-xylulose-5-phosphate (DXP) and 3-amino-2-oxopropyl phosphate (1-amino-acetone-3-phosphate or AAP) to form pyridoxine 5'-phosphate (PNP) and inorganic phosphate. This chain is Pyridoxine 5'-phosphate synthase, found in Ruegeria pomeroyi (strain ATCC 700808 / DSM 15171 / DSS-3) (Silicibacter pomeroyi).